The primary structure comprises 308 residues: Elongation factor Ts (308 aa).

Residues Thr80–Val83 are involved in Mg(2+) ion dislocation from EF-Tu.

It belongs to the EF-Ts family.

The protein localises to the cytoplasm. In terms of biological role, associates with the EF-Tu.GDP complex and induces the exchange of GDP to GTP. It remains bound to the aminoacyl-tRNA.EF-Tu.GTP complex up to the GTP hydrolysis stage on the ribosome. This is Elongation factor Ts from Sphingopyxis alaskensis (strain DSM 13593 / LMG 18877 / RB2256) (Sphingomonas alaskensis).